The following is a 105-amino-acid chain: Met repressor (105 aa).

It belongs to the MetJ family. In terms of assembly, homodimer.

The protein resides in the cytoplasm. This regulatory protein, when combined with SAM (S-adenosylmethionine) represses the expression of the methionine regulon and of enzymes involved in SAM synthesis. The protein is Met repressor of Vibrio cholerae serotype O1 (strain ATCC 39541 / Classical Ogawa 395 / O395).